The primary structure comprises 377 residues: Dihydroorotase, mitochondrial (377 aa).

His44, His46, Lys130, His168, and His206 together coordinate Zn(2+). N6-carboxylysine is present on Lys130. Ser223 bears the Phosphoserine mark. Asp280 is a Zn(2+) binding site.

This sequence belongs to the metallo-dependent hydrolases superfamily. DHOase family. Class II DHOase subfamily. It depends on Zn(2+) as a cofactor.

The protein resides in the mitochondrion. It carries out the reaction (S)-dihydroorotate + H2O = N-carbamoyl-L-aspartate + H(+). Its pathway is pyrimidine metabolism; UMP biosynthesis via de novo pathway; (S)-dihydroorotate from bicarbonate: step 3/3. This chain is Dihydroorotase, mitochondrial (PYR4), found in Arabidopsis thaliana (Mouse-ear cress).